Here is a 137-residue protein sequence, read N- to C-terminus: Putative mucosal pentraxin homolog (137 aa).

The region spanning 1–137 (MGMYLLHIGN…YVVTKPKVWA (137 aa)) is the Pentraxin (PTX) domain. E73, D75, and Q85 together coordinate Ca(2+).

The protein belongs to the pentraxin family. As to expression, not expressed in the intestinal tract including ascending colon, descending colon and rectum. Not expressed in the human colon cancer cell lines HT-29 and CaCo-2.

The protein is Putative mucosal pentraxin homolog (MPTX1) of Homo sapiens (Human).